The chain runs to 397 residues: Elongation factor Tu (397 aa).

The tr-type G domain occupies 10–206; sequence KPHVNIGTIG…AVDESIPEPQ (197 aa). The interval 19–26 is G1; sequence GHIDHGKT. 19–26 is a binding site for GTP; that stretch reads GHIDHGKT. Thr26 is a Mg(2+) binding site. Residues 62–66 are G2; sequence GITIS. Residues 83–86 are G3; the sequence is DCPG. Residues 83–87 and 138–141 contribute to the GTP site; these read DCPGH and NKAD. The tract at residues 138–141 is G4; it reads NKAD. The tract at residues 176–178 is G5; sequence SAL.

Belongs to the TRAFAC class translation factor GTPase superfamily. Classic translation factor GTPase family. EF-Tu/EF-1A subfamily. As to quaternary structure, monomer.

The protein resides in the cytoplasm. It catalyses the reaction GTP + H2O = GDP + phosphate + H(+). In terms of biological role, GTP hydrolase that promotes the GTP-dependent binding of aminoacyl-tRNA to the A-site of ribosomes during protein biosynthesis. The chain is Elongation factor Tu from Frankia casuarinae (strain DSM 45818 / CECT 9043 / HFP020203 / CcI3).